Reading from the N-terminus, the 318-residue chain is tRNA U34 carboxymethyltransferase (318 aa).

Carboxy-S-adenosyl-L-methionine is bound by residues Lys88, Trp102, Lys107, Gly126, Met192, Tyr196, and Arg311.

It belongs to the class I-like SAM-binding methyltransferase superfamily. CmoB family. As to quaternary structure, homotetramer.

The enzyme catalyses carboxy-S-adenosyl-L-methionine + 5-hydroxyuridine(34) in tRNA = 5-carboxymethoxyuridine(34) in tRNA + S-adenosyl-L-homocysteine + H(+). Its function is as follows. Catalyzes carboxymethyl transfer from carboxy-S-adenosyl-L-methionine (Cx-SAM) to 5-hydroxyuridine (ho5U) to form 5-carboxymethoxyuridine (cmo5U) at position 34 in tRNAs. The chain is tRNA U34 carboxymethyltransferase from Pseudomonas fluorescens (strain Pf0-1).